Here is a 542-residue protein sequence, read N- to C-terminus: Serine/threonine-protein phosphatase 2A regulatory subunit pptr-1 (542 aa).

2 disordered regions span residues 1-28 (MHGS…TGGQ) and 500-542 (DYLK…PAKK). Positions 528–542 (KKSSTGSETTTPAKK) are enriched in polar residues.

It belongs to the phosphatase 2A regulatory subunit B56 family. In terms of assembly, part of a complex consisting of a common heterodimeric core enzyme, composed of catalytic subunit let-92 and constant regulatory subunit paa-1, that associates with a variety of regulatory subunits which confer distinct properties to the holoenzyme. Interacts with akt-1 but not akt-2. Interacts with sgk-1. Interacts with P granule components meg-1, meg-3 and meg-4. As to expression, expressed in pharynx, vulva and spermatheca.

It is found in the cytoplasm. Probable regulatory subunit of serine/threonine-protein phosphatase let-92 which negatively regulates the insulin receptor signaling cascade composed of daf-2, age-1, akt-1, akt-2 and sgk-1 by promoting the dephosphorylation of akt-1 on 'Thr-350'. Negatively regulates several functions controlled by the insulin pathway including dauer formation, lifespan, fat storage and stress resistance. Plays a role in the asymmetric segregation of the P granule components during embryonic cell divisions but does not play an essential role in specifying germ cell fate. Within a PP2A phosphatase complex, acts redundantly with pptr-2, to dephosphorylate P granule components including meg-1 and meg-3 to promote the assembly and accumulation of zygotic P granules in the posterior cytoplasm during zygote polarization, and thus maintain P granule distribution and segregation in early stage embryos following meiosis. In adults, required to promote germ cell proliferation and differentiation when exposed to thermic stress. In Caenorhabditis elegans, this protein is Serine/threonine-protein phosphatase 2A regulatory subunit pptr-1.